Reading from the N-terminus, the 191-residue chain is Endoribonuclease YbeY (191 aa).

His122, His126, and His132 together coordinate Zn(2+). Residues 164 to 191 (QPKPSGPKAFPDAAERAELDKEVPGGGI) form a disordered region. Basic and acidic residues predominate over residues 176–191 (AAERAELDKEVPGGGI).

This sequence belongs to the endoribonuclease YbeY family. Zn(2+) is required as a cofactor.

It is found in the cytoplasm. In terms of biological role, single strand-specific metallo-endoribonuclease involved in late-stage 70S ribosome quality control and in maturation of the 3' terminus of the 16S rRNA. The protein is Endoribonuclease YbeY of Corynebacterium aurimucosum (strain ATCC 700975 / DSM 44827 / CIP 107346 / CN-1) (Corynebacterium nigricans).